The sequence spans 505 residues: Maturase K (505 aa).

This sequence belongs to the intron maturase 2 family. MatK subfamily.

It is found in the plastid. The protein resides in the chloroplast. In terms of biological role, usually encoded in the trnK tRNA gene intron. Probably assists in splicing its own and other chloroplast group II introns. This is Maturase K from Sciadopitys verticillata (Japanese umbrella-pine).